The sequence spans 396 residues: Elongation factor Tu (396 aa).

The 196-residue stretch at 10 to 205 (KPHVNIGTIG…AVDESIPDPV (196 aa)) folds into the tr-type G domain. The segment at 19–26 (GHVDHGKT) is G1. Residue 19-26 (GHVDHGKT) participates in GTP binding. Threonine 26 serves as a coordination point for Mg(2+). Residues 62-66 (GITIN) are G2. The segment at 83–86 (DAPG) is G3. GTP contacts are provided by residues 83–87 (DAPGH) and 138–141 (NKSD). The segment at 138-141 (NKSD) is G4. A G5 region spans residues 175 to 177 (SAL).

Belongs to the TRAFAC class translation factor GTPase superfamily. Classic translation factor GTPase family. EF-Tu/EF-1A subfamily. As to quaternary structure, monomer.

It localises to the cytoplasm. It catalyses the reaction GTP + H2O = GDP + phosphate + H(+). Its function is as follows. GTP hydrolase that promotes the GTP-dependent binding of aminoacyl-tRNA to the A-site of ribosomes during protein biosynthesis. This chain is Elongation factor Tu, found in Mycobacterium marinum (strain ATCC BAA-535 / M).